Here is a 196-residue protein sequence, read N- to C-terminus: Nucleoid occlusion factor SlmA (196 aa).

In terms of domain architecture, HTH tetR-type spans 7–68; the sequence is TNRREEILQA…GLIEFIEEAL (62 aa). Residues 31–50 constitute a DNA-binding region (H-T-H motif); it reads TTAKLAKQVGVSEAALYRHF. Positions 110–142 form a coiled coil; the sequence is HALMFENERLRDRINQLFERIETQLRQILRERK.

It belongs to the nucleoid occlusion factor SlmA family. Homodimer. Interacts with FtsZ.

The protein localises to the cytoplasm. The protein resides in the nucleoid. Its function is as follows. Required for nucleoid occlusion (NO) phenomenon, which prevents Z-ring formation and cell division over the nucleoid. Acts as a DNA-associated cell division inhibitor that binds simultaneously chromosomal DNA and FtsZ, and disrupts the assembly of FtsZ polymers. SlmA-DNA-binding sequences (SBS) are dispersed on non-Ter regions of the chromosome, preventing FtsZ polymerization at these regions. The protein is Nucleoid occlusion factor SlmA of Vibrio campbellii (strain ATCC BAA-1116).